The chain runs to 170 residues: Cyclic pyranopterin monophosphate synthase (170 aa).

Residues Leu-89–His-91 and Met-125–Glu-126 contribute to the substrate site. Residue Asp-140 is part of the active site.

This sequence belongs to the MoaC family. Homohexamer; trimer of dimers.

The enzyme catalyses (8S)-3',8-cyclo-7,8-dihydroguanosine 5'-triphosphate = cyclic pyranopterin phosphate + diphosphate. It participates in cofactor biosynthesis; molybdopterin biosynthesis. Its function is as follows. Catalyzes the conversion of (8S)-3',8-cyclo-7,8-dihydroguanosine 5'-triphosphate to cyclic pyranopterin monophosphate (cPMP). The sequence is that of Cyclic pyranopterin monophosphate synthase from Streptomyces coelicolor (strain ATCC BAA-471 / A3(2) / M145).